The primary structure comprises 924 residues: Exocyst complex component 2 (924 aa).

Residues 8–93 (PLVTGISPNE…GTSTVSFKLL (86 aa)) enclose the IPT/TIG domain. Positions 240–260 (QKLENVLNRASNTADTLFQEV) form a coiled coil. Phosphoserine occurs at positions 431, 432, and 435. Threonine 440 carries the phosphothreonine modification. N6-acetyllysine is present on lysine 454.

It belongs to the SEC5 family. The exocyst complex is composed of EXOC1, EXOC2, EXOC3, EXOC4, EXOC5, EXOC6, EXOC7 and EXOC8. Interacts with EXOC3L1. Interacts with GNEFR/DELGEF; this interaction occurs only in the presence of magnesium or manganese and is stimulated by dCTP or GTP. Interacts with RALA and RALB. Interacts with ARL13B; regulates ARL13B localization to the cilium membrane.

Its subcellular location is the midbody. It is found in the midbody ring. Its function is as follows. Component of the exocyst complex involved in the docking of exocytic vesicles with fusion sites on the plasma membrane. The protein is Exocyst complex component 2 (Exoc2) of Mus musculus (Mouse).